A 380-amino-acid chain; its full sequence is Outer membrane protein assembly factor BamB (380 aa).

The N-terminal stretch at 1 to 18 (MVQWKHAALLALALAVVG) is a signal peptide. The N-palmitoyl cysteine moiety is linked to residue cysteine 19. Cysteine 19 carries the S-diacylglycerol cysteine lipid modification.

This sequence belongs to the BamB family. As to quaternary structure, part of the Bam complex.

The protein localises to the cell outer membrane. Functionally, part of the outer membrane protein assembly complex, which is involved in assembly and insertion of beta-barrel proteins into the outer membrane. The protein is Outer membrane protein assembly factor BamB of Pseudomonas aeruginosa (strain ATCC 15692 / DSM 22644 / CIP 104116 / JCM 14847 / LMG 12228 / 1C / PRS 101 / PAO1).